The primary structure comprises 169 residues: Copper-resistant cuproprotein CopI (169 aa).

Positions 1 to 20 are cleaved as a signal peptide; it reads MIKKTLLVIALTFTVTTAFA. His98, Cys153, His158, and Met163 together coordinate Cu(2+).

The protein belongs to the CopI family.

Its subcellular location is the periplasm. Functionally, involved in copper tolerance. Mediates copper tolerance in aerobiosis. May also mediate tolerance under anaerobiosis. Not required for virulence or colonization in the mouse model. In Vibrio cholerae serotype O1 (strain ATCC 39315 / El Tor Inaba N16961), this protein is Copper-resistant cuproprotein CopI.